The primary structure comprises 35 residues: Thaumatin-like protein 6 (35 aa).

The protein belongs to the thaumatin family.

The polypeptide is Thaumatin-like protein 6 (Glebionis coronaria (Crown daisy)).